The chain runs to 330 residues: Phosphate acyltransferase (330 aa).

Belongs to the PlsX family. In terms of assembly, homodimer. Probably interacts with PlsY.

It localises to the cytoplasm. The catalysed reaction is a fatty acyl-[ACP] + phosphate = an acyl phosphate + holo-[ACP]. The protein operates within lipid metabolism; phospholipid metabolism. Catalyzes the reversible formation of acyl-phosphate (acyl-PO(4)) from acyl-[acyl-carrier-protein] (acyl-ACP). This enzyme utilizes acyl-ACP as fatty acyl donor, but not acyl-CoA. In Bacillus cereus (strain B4264), this protein is Phosphate acyltransferase.